Here is a 209-residue protein sequence, read N- to C-terminus: MGNGMNKILTGLFLGNFKDARDVEQLHKNNITHILSIHDSARPMLEGMKYLCIPASDSPSQNLIQHFKDSIAFIHECRLKGEGCLVHCLAGVSRSVTLVVAYVMTVTDFGWEDSLSAVRGARTCANPNMGFQKQLEDFGKCEVHHFRTWLKDTYGESTFHDKDEAKQLLDKHKQQEAAESQNATSSGRQWNSHLTSLSSRSYSNYTTET.

The Tyrosine-protein phosphatase domain occupies 4–144 (GMNKILTGLF…LEDFGKCEVH (141 aa)). The active-site Phosphocysteine intermediate is Cys-88. The tract at residues 169–192 (LDKHKQQEAAESQNATSSGRQWNS) is disordered. A compositionally biased stretch (polar residues) spans 177 to 190 (AAESQNATSSGRQW).

This sequence belongs to the protein-tyrosine phosphatase family. Non-receptor class dual specificity subfamily.

Its subcellular location is the cytoplasm. The protein resides in the nucleus. It catalyses the reaction O-phospho-L-tyrosyl-[protein] + H2O = L-tyrosyl-[protein] + phosphate. The catalysed reaction is O-phospho-L-seryl-[protein] + H2O = L-seryl-[protein] + phosphate. The enzyme catalyses O-phospho-L-threonyl-[protein] + H2O = L-threonyl-[protein] + phosphate. Functionally, activates the Jnk signaling pathway. Dephosphorylates and deactivates p38 and stress-activated protein kinase/c-Jun N-terminal kinase (SAPK/JNK). The chain is Dual specificity protein phosphatase 22 (dusp22) from Xenopus laevis (African clawed frog).